Here is a 118-residue protein sequence, read N- to C-terminus: Large ribosomal subunit protein bL19 (118 aa).

The protein belongs to the bacterial ribosomal protein bL19 family.

In terms of biological role, this protein is located at the 30S-50S ribosomal subunit interface and may play a role in the structure and function of the aminoacyl-tRNA binding site. This chain is Large ribosomal subunit protein bL19, found in Frankia alni (strain DSM 45986 / CECT 9034 / ACN14a).